We begin with the raw amino-acid sequence, 193 residues long: dCTP deaminase (193 aa).

DCTP contacts are provided by residues 110 to 115 (RSSLAR), Asp-128, 136 to 138 (VLE), Tyr-171, Lys-178, and Gln-182. The active-site Proton donor/acceptor is the Glu-138. The segment at 174–193 (RKSAKYKDQQEAVASRISQD) is disordered.

This sequence belongs to the dCTP deaminase family. Homotrimer.

The enzyme catalyses dCTP + H2O + H(+) = dUTP + NH4(+). Its pathway is pyrimidine metabolism; dUMP biosynthesis; dUMP from dCTP (dUTP route): step 1/2. Functionally, catalyzes the deamination of dCTP to dUTP. In Shewanella baltica (strain OS223), this protein is dCTP deaminase.